The sequence spans 451 residues: Probable glycine dehydrogenase (decarboxylating) subunit 1 (451 aa).

This sequence belongs to the GcvP family. N-terminal subunit subfamily. In terms of assembly, the glycine cleavage system is composed of four proteins: P, T, L and H. In this organism, the P 'protein' is a heterodimer of two subunits.

It catalyses the reaction N(6)-[(R)-lipoyl]-L-lysyl-[glycine-cleavage complex H protein] + glycine + H(+) = N(6)-[(R)-S(8)-aminomethyldihydrolipoyl]-L-lysyl-[glycine-cleavage complex H protein] + CO2. Functionally, the glycine cleavage system catalyzes the degradation of glycine. The P protein binds the alpha-amino group of glycine through its pyridoxal phosphate cofactor; CO(2) is released and the remaining methylamine moiety is then transferred to the lipoamide cofactor of the H protein. The chain is Probable glycine dehydrogenase (decarboxylating) subunit 1 from Thermococcus kodakarensis (strain ATCC BAA-918 / JCM 12380 / KOD1) (Pyrococcus kodakaraensis (strain KOD1)).